Reading from the N-terminus, the 207-residue chain is Large ribosomal subunit protein uL4 (207 aa).

Positions 44 to 78 are disordered; it reads MRQGTHKTKNRAEVSGGGRKPWRQKGTGRARQGSI.

Belongs to the universal ribosomal protein uL4 family. In terms of assembly, part of the 50S ribosomal subunit.

One of the primary rRNA binding proteins, this protein initially binds near the 5'-end of the 23S rRNA. It is important during the early stages of 50S assembly. It makes multiple contacts with different domains of the 23S rRNA in the assembled 50S subunit and ribosome. Functionally, forms part of the polypeptide exit tunnel. This is Large ribosomal subunit protein uL4 from Geobacillus kaustophilus (strain HTA426).